We begin with the raw amino-acid sequence, 342 residues long: tRNA N6-adenosine threonylcarbamoyltransferase (342 aa).

Positions 111 and 115 each coordinate Fe cation. Substrate contacts are provided by residues Leu134–Gly138, Asp167, Gly180, and Asn272. Residue Asp300 coordinates Fe cation.

Belongs to the KAE1 / TsaD family. It depends on Fe(2+) as a cofactor.

The protein localises to the cytoplasm. It catalyses the reaction L-threonylcarbamoyladenylate + adenosine(37) in tRNA = N(6)-L-threonylcarbamoyladenosine(37) in tRNA + AMP + H(+). In terms of biological role, required for the formation of a threonylcarbamoyl group on adenosine at position 37 (t(6)A37) in tRNAs that read codons beginning with adenine. Is involved in the transfer of the threonylcarbamoyl moiety of threonylcarbamoyl-AMP (TC-AMP) to the N6 group of A37, together with TsaE and TsaB. TsaD likely plays a direct catalytic role in this reaction. The sequence is that of tRNA N6-adenosine threonylcarbamoyltransferase from Aromatoleum aromaticum (strain DSM 19018 / LMG 30748 / EbN1) (Azoarcus sp. (strain EbN1)).